The primary structure comprises 344 residues: Heptahelical transmembrane protein 3 (344 aa).

The Cytoplasmic portion of the chain corresponds to 1–76 (MKRRRSAKKS…AFSWHNETLN (76 aa)). Residues 77 to 97 (IWTHLIGFGIFLWMTVVSCLE) form a helical membrane-spanning segment. Residues 98 to 147 (TTEISLAGVFNGMAGVRICLSSNQTLLHDSNVTHHISCLTSQGEAIPKWP) are Extracellular-facing. Residues 148-168 (WLVYLVGAMGCLICSSVSHLL) form a helical membrane-spanning segment. Residues 169-184 (ACHSKRFNVFFWRLDY) lie on the Cytoplasmic side of the membrane. The chain crosses the membrane as a helical span at residues 185 to 205 (AGISLMIVASFFAPIYYAFSC). Residues 206-210 (HPNFR) are Extracellular-facing. Residues 211–231 (LLYLSSISILGLLAIITLLSP) form a helical membrane-spanning segment. Residues 232–244 (ALSTPRFRPFRAN) are Cytoplasmic-facing. A helical transmembrane segment spans residues 245–265 (LFLAMGSSAVIPATHVLCLYW). The Extracellular portion of the chain corresponds to 266–269 (DHPN). Residues 270 to 290 (VFIALGYEIATALSYFVGATF) form a helical membrane-spanning segment. The Cytoplasmic segment spans residues 291–312 (YVSRVPERWKPGAFDMAGHSHQ). Residues 313 to 333 (IFHVFVVMGALAHCVTTLLII) traverse the membrane as a helical segment. Topologically, residues 334 to 344 (DFSRASPSCGF) are extracellular.

It belongs to the ADIPOR family. In terms of tissue distribution, expressed in roots and flowers.

It localises to the membrane. In terms of biological role, may play a role in abiotic stress response. This Arabidopsis thaliana (Mouse-ear cress) protein is Heptahelical transmembrane protein 3 (HHP3).